Consider the following 403-residue polypeptide: Ribosomal RNA large subunit methyltransferase I (403 aa).

A PUA domain is found at 9–88; it reads YPRLVLSKGR…ESIDIAFFTR (80 aa).

This sequence belongs to the methyltransferase superfamily. RlmI family.

It is found in the cytoplasm. It carries out the reaction cytidine(1962) in 23S rRNA + S-adenosyl-L-methionine = 5-methylcytidine(1962) in 23S rRNA + S-adenosyl-L-homocysteine + H(+). Functionally, specifically methylates the cytosine at position 1962 (m5C1962) of 23S rRNA. The sequence is that of Ribosomal RNA large subunit methyltransferase I from Salmonella typhi.